The primary structure comprises 596 residues: Elongation factor 4 (596 aa).

The 183-residue stretch at 2–184 (KHIRNFSIIA…VIVEQIPPPE (183 aa)) folds into the tr-type G domain. GTP is bound by residues 14–19 (DHGKST) and 131–134 (NKID).

Belongs to the TRAFAC class translation factor GTPase superfamily. Classic translation factor GTPase family. LepA subfamily.

It localises to the cell inner membrane. The enzyme catalyses GTP + H2O = GDP + phosphate + H(+). Functionally, required for accurate and efficient protein synthesis under certain stress conditions. May act as a fidelity factor of the translation reaction, by catalyzing a one-codon backward translocation of tRNAs on improperly translocated ribosomes. Back-translocation proceeds from a post-translocation (POST) complex to a pre-translocation (PRE) complex, thus giving elongation factor G a second chance to translocate the tRNAs correctly. Binds to ribosomes in a GTP-dependent manner. This chain is Elongation factor 4, found in Shewanella pealeana (strain ATCC 700345 / ANG-SQ1).